The sequence spans 817 residues: Cargo-transport protein YPP1 (817 aa).

The protein belongs to the YPP1 family. In terms of assembly, interacts with STT4 and ribosomes.

It localises to the cytoplasmic granule. The protein resides in the cell membrane. Functionally, involved in endocytosis. In Saccharomyces cerevisiae (strain YJM789) (Baker's yeast), this protein is Cargo-transport protein YPP1 (YPP1).